Reading from the N-terminus, the 66-residue chain is Phylloseptin-S2 (66 aa).

An N-terminal signal peptide occupies residues 1 to 22; that stretch reads MAFLKKSLFLVLFLGLVSLSIC. Positions 23 to 46 are excised as a propeptide; it reads EEEKRETEEEEHDQEEDDKSEEKR. The segment at 25-44 is disordered; that stretch reads EKRETEEEEHDQEEDDKSEE. The span at 30 to 41 shows a compositional bias: acidic residues; sequence EEEEHDQEEDDK. F65 carries the post-translational modification Phenylalanine amide.

Expressed by the skin glands.

Its subcellular location is the secreted. It is found in the target cell membrane. Functionally, antimicrobial peptide with high activity against Gram-positive bacteria, moderate activity against Gram-negative bacteria, and moderate activity against fungi. Acts by causing bacterial membrane disruption inducing leakage of the intracellular content followed by cell death. It adopts an alpha-helical amphipathic structure in membrane environments. Also shows highly potent antiparasitic activity against Leishmania species. Shows moderate hemolytic activity on human erythrocytes (LC(50)=25 uM). Is also active on human monocytes (IC(50)=22.5 uM). The protein is Phylloseptin-S2 of Phyllomedusa sauvagei (Sauvage's leaf frog).